We begin with the raw amino-acid sequence, 371 residues long: Peptide chain release factor 2 (371 aa).

Gln253 is modified (N5-methylglutamine).

This sequence belongs to the prokaryotic/mitochondrial release factor family. Post-translationally, methylated by PrmC. Methylation increases the termination efficiency of RF2.

It localises to the cytoplasm. Peptide chain release factor 2 directs the termination of translation in response to the peptide chain termination codons UGA and UAA. This chain is Peptide chain release factor 2, found in Mycobacterium sp. (strain JLS).